Consider the following 1424-residue polypeptide: Serine/threonine-protein kinase LMTK3 (1424 aa).

The signal sequence occupies residues 1–20 (MPAPGALILLAAVSASGCLA). A helical membrane pass occupies residues 40–60 (AVVLISCSGLLAFIFLLLTCL). Residues 74 to 95 (NPEGEDCSGEYTPPAEETSSSQ) are disordered. Residues 133-411 (LSYLQEIGSG…SDLQLQLTYL (279 aa)) form the Protein kinase domain. ATP-binding positions include 139 to 147 (IGSGWFGKV) and Lys164. Ser232 carries the post-translational modification Phosphoserine. The active-site Proton acceptor is the Asp266. 2 disordered regions span residues 413–465 (SERP…PDDV) and 486–516 (RGAGRGGGAPPWQPASAPPAPHTNPSNPFYE). Residues 418–439 (RPPPPPPPPRDGPFPWPWPPSH) show a composition bias toward pro residues. Residue Arg490 is modified to Omega-N-methylarginine. Pro residues predominate over residues 496–507 (PWQPASAPPAPH). Residues Ser531 and Ser535 each carry the phosphoserine modification. Disordered regions lie at residues 544 to 666 (EHGS…PLPC), 680 to 964 (LERG…MSPE), 976 to 1024 (MSPK…APET), 1041 to 1313 (GLEM…RKRK), and 1325 to 1424 (LFDQ…PVEN). Residues 571-584 (QTPSEVPQLVSETW) are compositionally biased toward polar residues. Residues 638 to 647 (AEEEEEESSP) show a composition bias toward acidic residues. The segment covering 700–713 (PPEDDSSLRAERGS) has biased composition (basic and acidic residues). Pro residues predominate over residues 744-758 (RGPPPAPPPPPPPPR). The span at 759-791 (ASAEPAASPDPPSALASPGSGLSSPGPKPGDSG) shows a compositional bias: low complexity. Pro residues predominate over residues 818 to 841 (PRAPPEPPDPGAPRPPPDPGPLPL). Residues 935–954 (DMKEKVAENGLESPEKEERA) show a composition bias toward basic and acidic residues. A phosphoserine mark is found at Ser947, Ser962, and Ser977. A compositionally biased stretch (basic and acidic residues) spans 994 to 1004 (RNTERPPEIGP). Over residues 1084–1094 (GSGGRALGGVG) the composition is skewed to gly residues. The span at 1095 to 1105 (TAPAGGPASAV) shows a compositional bias: low complexity. A compositionally biased stretch (basic and acidic residues) spans 1167–1177 (DPLKPERKGPE). Positions 1200–1213 (SRLSLALPPLTLTP) are enriched in low complexity. Residues 1231-1241 (AAGGEAGGAGA) are compositionally biased toward gly residues. A compositionally biased stretch (acidic residues) spans 1245 to 1261 (AEEDGEDEDEDEEDEEA). Positions 1262–1272 (AGSRDPGRTRE) are enriched in basic and acidic residues. A compositionally biased stretch (polar residues) spans 1329–1339 (ETPTNELSVQG). Residues 1348 to 1360 (STPPAPPTPPHPT) are compositionally biased toward pro residues.

The protein belongs to the protein kinase superfamily. Tyr protein kinase family. As to quaternary structure, interacts with ESR1. Interacts with AP-2 complex subunit alpha. Mg(2+) serves as cofactor. Post-translationally, autophosphorylated. In terms of tissue distribution, expressed in brain. Predominantly expressed in cerebral cortex, thalamus, the cerebellum and hippocampal formation (at protein level).

It localises to the membrane. It is found in the cell projection. Its subcellular location is the axon. The protein resides in the dendrite. The protein localises to the golgi apparatus membrane. It carries out the reaction L-seryl-[protein] + ATP = O-phospho-L-seryl-[protein] + ADP + H(+). The catalysed reaction is L-threonyl-[protein] + ATP = O-phospho-L-threonyl-[protein] + ADP + H(+). Its function is as follows. Protein kinase which phosphorylates ESR1 (in vitro) and protects it against proteasomal degradation. May also regulate ESR1 levels indirectly via a PKC-AKT-FOXO3 pathway where it decreases the activity of PKC and the phosphorylation of AKT, thereby increasing binding of transcriptional activator FOXO3 to the ESR1 promoter and increasing ESR1 transcription. Involved in endocytic trafficking of N-methyl-D-aspartate receptors (NMDAR) in neurons. The sequence is that of Serine/threonine-protein kinase LMTK3 (Lmtk3) from Mus musculus (Mouse).